The following is a 192-amino-acid chain: Immunity protein YqcF (192 aa).

As to quaternary structure, probably interacts with cognate toxin YqcG but not with other non-cognate toxins. The interaction inhibits the toxic activity of YqcG.

It localises to the cytoplasm. Its function is as follows. Immunity component of one of 6 LXG toxin-immunity modules in this strain. They promote kin selection, mediate competition in biofilms, and drive spatial segregation of different strains, indicating that LXG toxins may help avoid warfare between strains in biofilms. Mediates intercellular competition during biofilm formation; disruption of the operon disadvantages the bacteria, but overexpression of the cognate immunity protein restores growth in competition with wild-type. In situ neutralizes the toxic effect of cognate toxin YqcG. Neutralizes the toxic activity of cognate toxin YqcG upon expression in E.coli. Does not have immunity protein activity on other LXG toxins. The protein is Immunity protein YqcF (yqcF) of Bacillus subtilis (strain 168).